The sequence spans 402 residues: Tryptophan synthase beta chain (402 aa).

K92 is subject to N6-(pyridoxal phosphate)lysine.

It belongs to the TrpB family. Tetramer of two alpha and two beta chains. Requires pyridoxal 5'-phosphate as cofactor.

It carries out the reaction (1S,2R)-1-C-(indol-3-yl)glycerol 3-phosphate + L-serine = D-glyceraldehyde 3-phosphate + L-tryptophan + H2O. Its pathway is amino-acid biosynthesis; L-tryptophan biosynthesis; L-tryptophan from chorismate: step 5/5. Its function is as follows. The beta subunit is responsible for the synthesis of L-tryptophan from indole and L-serine. This is Tryptophan synthase beta chain from Staphylococcus epidermidis (strain ATCC 35984 / DSM 28319 / BCRC 17069 / CCUG 31568 / BM 3577 / RP62A).